The primary structure comprises 96 residues: MVEFSHTKKIGSAGRFGSRYGRKIRVRLRDVEIKQKKEYKCPVCAFPKLKRAGTSIWVCEKCGAKIAGGAYTPETGAGKVVTKAIRRVIESKSREI.

The C4-type zinc-finger motif lies at 41-62 (CPVCAFPKLKRAGTSIWVCEKC).

The protein belongs to the eukaryotic ribosomal protein eL43 family. Zn(2+) serves as cofactor.

The sequence is that of Large ribosomal subunit protein eL43 from Methanococcus maripaludis (strain C5 / ATCC BAA-1333).